The primary structure comprises 443 residues: 23S rRNA (uracil(1939)-C(5))-methyltransferase RlmD (443 aa).

One can recognise a TRAM domain in the interval 12 to 70 (SKQLSAKVSLQVTRLDHLGAGIAQHNGKVVFIPGVLPGEKAMVQLTEQKKRYSRAKLLN). Positions 83, 89, 92, and 171 each coordinate [4Fe-4S] cluster. S-adenosyl-L-methionine-binding residues include Q277, F306, N311, E327, D354, and D374. The active-site Nucleophile is C400.

This sequence belongs to the class I-like SAM-binding methyltransferase superfamily. RNA M5U methyltransferase family. RlmD subfamily.

It catalyses the reaction uridine(1939) in 23S rRNA + S-adenosyl-L-methionine = 5-methyluridine(1939) in 23S rRNA + S-adenosyl-L-homocysteine + H(+). In terms of biological role, catalyzes the formation of 5-methyl-uridine at position 1939 (m5U1939) in 23S rRNA. In Shewanella woodyi (strain ATCC 51908 / MS32), this protein is 23S rRNA (uracil(1939)-C(5))-methyltransferase RlmD.